A 329-amino-acid chain; its full sequence is uncharacterized protein (329 aa).

Coiled coils occupy residues 57-120 and 225-251; these read KKEE…QEVT and QRQR…GNMM.

This is an uncharacterized protein from Homo sapiens (Human).